Reading from the N-terminus, the 461-residue chain is Cytochrome c biogenesis protein CcsB (461 aa).

The next 3 membrane-spanning stretches (helical) occupy residues 32 to 52 (LRLA…GTVI), 91 to 111 (TWWF…CTFT), and 178 to 198 (IGPI…IWGA).

It belongs to the Ccs1/CcsB family. May interact with CcsA.

It is found in the cellular thylakoid membrane. Required during biogenesis of c-type cytochromes (cytochrome c6 and cytochrome f) at the step of heme attachment. In Nostoc sp. (strain PCC 7120 / SAG 25.82 / UTEX 2576), this protein is Cytochrome c biogenesis protein CcsB.